A 543-amino-acid polypeptide reads, in one-letter code: Chaperonin GroEL (543 aa).

ATP-binding positions include 29 to 32 (TLGP), 86 to 90 (DGTTT), G413, 476 to 478 (NAA), and D492.

This sequence belongs to the chaperonin (HSP60) family. As to quaternary structure, forms a cylinder of 14 subunits composed of two heptameric rings stacked back-to-back. Interacts with the co-chaperonin GroES.

It localises to the cytoplasm. The catalysed reaction is ATP + H2O + a folded polypeptide = ADP + phosphate + an unfolded polypeptide.. Together with its co-chaperonin GroES, plays an essential role in assisting protein folding. The GroEL-GroES system forms a nano-cage that allows encapsulation of the non-native substrate proteins and provides a physical environment optimized to promote and accelerate protein folding. The polypeptide is Chaperonin GroEL (Streptococcus pyogenes serotype M5 (strain Manfredo)).